A 362-amino-acid polypeptide reads, in one-letter code: Mitochondrial distribution and morphology protein 12 (362 aa).

One can recognise an SMP-LTD domain in the interval 1 to 361 (MSFDINWSQL…WPSWLCFDMS (361 aa)). 2 disordered regions span residues 65–141 (DFYE…AATP) and 170–207 (TPSG…SKRG). Composition is skewed to polar residues over residues 106–119 (VTLS…TQFA) and 170–187 (TPSG…MRTG). A compositionally biased stretch (low complexity) spans 192–201 (PISNTPISSS).

The protein belongs to the MDM12 family. As to quaternary structure, component of the ER-mitochondria encounter structure (ERMES) or MDM complex, composed of MMM1, MDM10, MDM12 and MDM34. An MMM1 homodimer associates with one molecule of MDM12 on each side in a pairwise head-to-tail manner, and the SMP-LTD domains of MMM1 and MDM12 generate a continuous hydrophobic tunnel for phospholipid trafficking.

The protein resides in the mitochondrion outer membrane. The protein localises to the endoplasmic reticulum membrane. Component of the ERMES/MDM complex, which serves as a molecular tether to connect the endoplasmic reticulum (ER) and mitochondria. Components of this complex are involved in the control of mitochondrial shape and protein biogenesis, and function in nonvesicular lipid trafficking between the ER and mitochondria. MDM12 is required for the interaction of the ER-resident membrane protein MMM1 and the outer mitochondrial membrane-resident beta-barrel protein MDM10. The MDM12-MMM1 subcomplex functions in the major beta-barrel assembly pathway that is responsible for biogenesis of all mitochondrial outer membrane beta-barrel proteins, and acts in a late step after the SAM complex. The MDM10-MDM12-MMM1 subcomplex further acts in the TOM40-specific pathway after the action of the MDM12-MMM1 complex. Essential for establishing and maintaining the structure of mitochondria and maintenance of mtDNA nucleoids. The protein is Mitochondrial distribution and morphology protein 12 of Meyerozyma guilliermondii (strain ATCC 6260 / CBS 566 / DSM 6381 / JCM 1539 / NBRC 10279 / NRRL Y-324) (Yeast).